Here is a 557-residue protein sequence, read N- to C-terminus: 2-succinyl-5-enolpyruvyl-6-hydroxy-3-cyclohexene-1-carboxylate synthase (557 aa).

The protein belongs to the TPP enzyme family. MenD subfamily. In terms of assembly, homodimer. Mg(2+) serves as cofactor. Requires Mn(2+) as cofactor. It depends on thiamine diphosphate as a cofactor.

The catalysed reaction is isochorismate + 2-oxoglutarate + H(+) = 5-enolpyruvoyl-6-hydroxy-2-succinyl-cyclohex-3-ene-1-carboxylate + CO2. The protein operates within quinol/quinone metabolism; 1,4-dihydroxy-2-naphthoate biosynthesis; 1,4-dihydroxy-2-naphthoate from chorismate: step 2/7. It functions in the pathway quinol/quinone metabolism; menaquinone biosynthesis. Its function is as follows. Catalyzes the thiamine diphosphate-dependent decarboxylation of 2-oxoglutarate and the subsequent addition of the resulting succinic semialdehyde-thiamine pyrophosphate anion to isochorismate to yield 2-succinyl-5-enolpyruvyl-6-hydroxy-3-cyclohexene-1-carboxylate (SEPHCHC). The protein is 2-succinyl-5-enolpyruvyl-6-hydroxy-3-cyclohexene-1-carboxylate synthase of Staphylococcus aureus (strain USA300).